A 515-amino-acid chain; its full sequence is Maturase K (515 aa).

The protein belongs to the intron maturase 2 family. MatK subfamily.

It is found in the plastid. It localises to the chloroplast. Usually encoded in the trnK tRNA gene intron. Probably assists in splicing its own and other chloroplast group II introns. The polypeptide is Maturase K (Cedrus atlantica (Atlas cedar)).